Here is a 155-residue protein sequence, read N- to C-terminus: MGLKLLESRLCLLLLLGLVLTLVSCQRPTPSQKFDIQHIYKKSSPKCDDAMRVVNKYTGKCKDLNTFLHTTFADVVRVCHNPPKTCKDGTSPNCHDSSSKVSVTICKLTKRARNYTHCRYKTTGAKKSYTVACNPRTPKDRPTYPVVPVHLDRLF.

The first 25 residues, 1-25, serve as a signal peptide directing secretion; sequence MGLKLLESRLCLLLLLGLVLTLVSC. The active-site Proton acceptor is His-38. 4 disulfide bridges follow: Cys-47/Cys-106, Cys-61/Cys-118, Cys-79/Cys-133, and Cys-86/Cys-94. 62-66 lines the substrate pocket; it reads KDLNT. N-linked (GlcNAc...) asparagine glycosylation occurs at Asn-114. His-150 (proton donor) is an active-site residue.

This sequence belongs to the pancreatic ribonuclease family.

The catalysed reaction is an [RNA] containing cytidine + H2O = an [RNA]-3'-cytidine-3'-phosphate + a 5'-hydroxy-ribonucleotide-3'-[RNA].. The enzyme catalyses an [RNA] containing uridine + H2O = an [RNA]-3'-uridine-3'-phosphate + a 5'-hydroxy-ribonucleotide-3'-[RNA].. Its function is as follows. This is a non-secretory ribonuclease. It is a pyrimidine specific nuclease with a slight preference for U. Cytotoxin and helminthotoxin. Possesses a wide variety of biological activities. This chain is Ribonuclease 2B, found in Mus musculus (Mouse).